The sequence spans 728 residues: Histone demethylase JHD2 (728 aa).

One can recognise a JmjN domain in the interval I4 to P47. The segment at D235–G285 adopts a PHD-type zinc-finger fold. Residues K381–K549 enclose the JmjC domain. Fe cation is bound by residues H427, D430, and H517.

This sequence belongs to the JARID1 histone demethylase family. Fe(2+) is required as a cofactor.

Its subcellular location is the nucleus. It carries out the reaction N(6),N(6),N(6)-trimethyl-L-lysyl(4)-[histone H3] + 3 2-oxoglutarate + 3 O2 = L-lysyl(4)-[histone H3] + 3 formaldehyde + 3 succinate + 3 CO2. In terms of biological role, histone demethylase that demethylates 'Lys-4' of histone H3, thereby playing a central role in histone code. Demethylates trimethylated H3 'Lys-4'. This is Histone demethylase JHD2 (JHD2) from Saccharomyces cerevisiae (strain ATCC 204508 / S288c) (Baker's yeast).